The following is a 121-amino-acid chain: Large ribosomal subunit protein uL22 (121 aa).

The protein belongs to the universal ribosomal protein uL22 family. In terms of assembly, part of the 50S ribosomal subunit.

Its function is as follows. This protein binds specifically to 23S rRNA; its binding is stimulated by other ribosomal proteins, e.g. L4, L17, and L20. It is important during the early stages of 50S assembly. It makes multiple contacts with different domains of the 23S rRNA in the assembled 50S subunit and ribosome. Functionally, the globular domain of the protein is located near the polypeptide exit tunnel on the outside of the subunit, while an extended beta-hairpin is found that lines the wall of the exit tunnel in the center of the 70S ribosome. This Synechocystis sp. (strain ATCC 27184 / PCC 6803 / Kazusa) protein is Large ribosomal subunit protein uL22.